The sequence spans 350 residues: MSDTTQVGWQLSEHAPLRALNTFHVEATARWLLSVHTPEALPQALAAPEIADQPLLVLGSGSNVLLAGDPPGCVLCFENRDTAIIAHHADHAIVRAGAGVNWHALVLYSLQQGLSGLENLALIPGTVGACPIQNIGAYGAQVGDFIHVVEAFDRHHQQFVRLDAAACALGYRDSVFKQQPERYLIVAVEFNLPLLCELRLDYAGIREELASMGAELARAADVAQAVINIRQRKLPDPDVLGNAGSFFKNPLLPNEQIAALQASFADMPVYPGEHAGLGKLSAAWLIEQCGWKGRREGDAGVSPEHALVLVNYGTASGAQLLDFARRIAESVRERYSVILEPEPRIIGAHW.

An FAD-binding PCMH-type domain is found at 24–195 (HVEATARWLL…VAVEFNLPLL (172 aa)). Arg-172 is an active-site residue. Ser-245 acts as the Proton donor in catalysis. Glu-342 is an active-site residue.

The protein belongs to the MurB family. FAD serves as cofactor.

It localises to the cytoplasm. The enzyme catalyses UDP-N-acetyl-alpha-D-muramate + NADP(+) = UDP-N-acetyl-3-O-(1-carboxyvinyl)-alpha-D-glucosamine + NADPH + H(+). The protein operates within cell wall biogenesis; peptidoglycan biosynthesis. Cell wall formation. In Xanthomonas oryzae pv. oryzae (strain PXO99A), this protein is UDP-N-acetylenolpyruvoylglucosamine reductase.